The primary structure comprises 155 residues: Endoribonuclease YbeY (155 aa).

Positions 120, 124, and 130 each coordinate Zn(2+).

Belongs to the endoribonuclease YbeY family. Zn(2+) serves as cofactor.

It localises to the cytoplasm. In terms of biological role, single strand-specific metallo-endoribonuclease involved in late-stage 70S ribosome quality control and in maturation of the 3' terminus of the 16S rRNA. The polypeptide is Endoribonuclease YbeY (Staphylococcus aureus (strain MSSA476)).